The chain runs to 398 residues: L-methionine gamma-lyase (398 aa).

Pyridoxal 5'-phosphate is bound by residues 59–61 (YSR) and 89–90 (GM). Y114 provides a ligand contact to substrate. 208 to 210 (SAT) contacts pyridoxal 5'-phosphate. Position 211 is an N6-(pyridoxal phosphate)lysine (K211). Residue R375 coordinates substrate.

The protein belongs to the trans-sulfuration enzymes family. L-methionine gamma-lyase subfamily. In terms of assembly, homotetramer; dimer of active dimers. The cofactor is pyridoxal 5'-phosphate.

It carries out the reaction L-methionine + H2O = methanethiol + 2-oxobutanoate + NH4(+). The catalysed reaction is L-homocysteine + H2O = 2-oxobutanoate + hydrogen sulfide + NH4(+) + H(+). Its activity is regulated as follows. Irreversibly inactivated by DL-propargylglycine. In terms of biological role, catalyzes the alpha,gamma-elimination of L-methionine to produce methanethiol, 2-oxobutanoate and ammonia. Is involved in L-methionine catabolism. In fact, shows a multicatalytic function since it also catalyzes gamma-replacement of L-methionine with thiol compounds, alpha,gamma-elimination and gamma-replacement reactions of L-homocysteine and its S-substituted derivatives, O-substituted-L-homoserines and DL-selenomethionine, and, to a lesser extent, alpha,beta-elimination and beta-replacement reactions of L-cysteine, S-methyl-L-cysteine, and O-acetyl-L-serine. Also catalyzes deamination and gamma-addition reactions of L-vinylglycine. Thus, the enzyme is able to cleave C-S, C-Se, and C-O bonds of sulfur, selenium, and oxygen amino acids, respectively. This Pseudomonas putida (Arthrobacter siderocapsulatus) protein is L-methionine gamma-lyase.